The chain runs to 1851 residues: Protein lap4 (1851 aa).

LRR repeat units follow at residues 38 to 59 (TLEE…FFRL), 61 to 82 (RLRK…IQNF), 84 to 105 (NLVE…IKHL), 107 to 128 (SLQV…FSQL), 130 to 152 (NLTV…GSLT), 153 to 174 (QLES…ISQL), 176 to 197 (KLKR…LGYL), 199 to 220 (GLHE…LGLL), 222 to 243 (KLTY…ISGL), 245 to 267 (SLTD…AKLS), 268 to 289 (RLTI…LGNC), 291 to 312 (NMQE…IGQM), 314 to 335 (KLNN…IGQC), 337 to 358 (NLGV…LGNC), 360 to 382 (VLHV…VNLQ), and 383 to 403 (LKAV…QPDT). Disordered regions lie at residues 427 to 474 (PARD…KDLK), 584 to 641 (VGGS…VQHL), and 656 to 719 (SQER…PDNL). Serine 433 and serine 435 each carry phosphoserine. A compositionally biased stretch (basic and acidic residues) spans 438 to 461 (FEEREPSRTVVKFSEEATQEKETP). A coiled-coil region spans residues 471-492 (KDLKAKAQKLKVERSRNEEHAN). A compositionally biased stretch (acidic residues) spans 589-601 (EVQDDDEQEDEFE). Basic residues predominate over residues 620-639 (RPPKLHRRDTPHHLKNKRVQ). The segment covering 656-672 (SQERNDTTPQHSLSGKV) has biased composition (polar residues). The span at 676–686 (IEEEEQLEVEQ) shows a compositional bias: acidic residues. Residues 677–693 (EEEEQLEVEQEQQQQQQ) adopt a coiled-coil conformation. A phosphoserine mark is found at serine 700, serine 702, and serine 705. The PDZ 1 domain occupies 731–818 (EIHIERTAAG…VLVLVVQREV (88 aa)). Serine 834 and serine 837 each carry phosphoserine. One can recognise a PDZ 2 domain in the interval 929–1019 (HTTLIRDQIG…FVRLVLQREY (91 aa)). A phosphoserine mark is found at serine 1031 and serine 1041. The interval 1067-1150 (LATTTPTPKP…EAQPSSLRPL (84 aa)) is disordered. Polar residues-rich tracts occupy residues 1080–1097 (ASIS…TNGF) and 1132–1149 (GSTT…SLRP). 2 consecutive PDZ domains span residues 1239–1329 (EVVL…QHDP) and 1336–1428 (EVLL…CKGY). Residues 1448 to 1467 (NSSASCSGGSRQGSRASETG) show a composition bias toward polar residues. The disordered stretch occupies residues 1448-1485 (NSSASCSGGSRQGSRASETGSELSQSQSVSSLDHEEDE). Over residues 1468–1478 (SELSQSQSVSS) the composition is skewed to low complexity. A phosphoserine mark is found at serine 1475, serine 1477, and serine 1478. Threonine 1599 is subject to Phosphothreonine. The span at 1647-1669 (AESANSAGAPSPAVPASTPGSAP) shows a compositional bias: low complexity. Disordered stretches follow at residues 1647 to 1751 (AESA…KVFS) and 1772 to 1851 (LRRD…VFRS). Residues 1725 to 1751 (VSDKKRFFESAMEDQHKPTQKTDKVFS) show a composition bias toward basic and acidic residues. Positions 1753 to 1790 (LSKDEVEKLRQEEERKIATLRRDKNSRLLDAANDNIDK) form a coiled coil. Over residues 1807–1816 (DDNDDSDQEE) the composition is skewed to acidic residues. A compositionally biased stretch (basic and acidic residues) spans 1831-1851 (HFDDAEDMRNPLDEIEAVFRS).

It belongs to the LAP (LRR and PDZ) protein family. As to expression, during germ band extension, expression of isoform A occurs predominantly in neuroblasts derived from the neuro-ectoderm and later is restricted to CNS neurons and pole cells. Isoform C is strongly expressed in PNS and a subset of CNS neurons. In the adult, expressed in third antennal segment and maxillary palps, major olfactory organs and in Johnstons organ in the second antennal segment. Expression is also observed in cortical regions of the brain. Isoforms expressed in epithelia are coexpressed with dlg1 throughout development.

Its subcellular location is the cytoplasm. The protein localises to the apicolateral cell membrane. It is found in the cell junction. The protein resides in the septate junction. Its function is as follows. Required for polarization of the embryonic, imaginal disk and follicular epithelia. Specifically restricts apical membrane determinants to the apical cell surface; acts to exclude crb from the basolateral domain and define adherens junction position. Regulates cellular growth and differentiation; acts as a tumor suppressor. Essential for odor guided behavior. The polypeptide is Protein lap4 (Drosophila melanogaster (Fruit fly)).